Reading from the N-terminus, the 161-residue chain is 3-hydroxyacyl-[acyl-carrier-protein] dehydratase FabZ (161 aa).

The active site involves His64.

Belongs to the thioester dehydratase family. FabZ subfamily.

The protein localises to the cytoplasm. It catalyses the reaction a (3R)-hydroxyacyl-[ACP] = a (2E)-enoyl-[ACP] + H2O. Involved in unsaturated fatty acids biosynthesis. Catalyzes the dehydration of short chain beta-hydroxyacyl-ACPs and long chain saturated and unsaturated beta-hydroxyacyl-ACPs. This is 3-hydroxyacyl-[acyl-carrier-protein] dehydratase FabZ from Paramagnetospirillum magneticum (strain ATCC 700264 / AMB-1) (Magnetospirillum magneticum).